We begin with the raw amino-acid sequence, 92 residues long: Small ribosomal subunit protein uS19 (92 aa).

This sequence belongs to the universal ribosomal protein uS19 family.

Functionally, protein S19 forms a complex with S13 that binds strongly to the 16S ribosomal RNA. The polypeptide is Small ribosomal subunit protein uS19 (Acaryochloris marina (strain MBIC 11017)).